Consider the following 362-residue polypeptide: Peptide chain release factor 1 (362 aa).

Glutamine 240 is modified (N5-methylglutamine).

This sequence belongs to the prokaryotic/mitochondrial release factor family. In terms of processing, methylated by PrmC. Methylation increases the termination efficiency of RF1.

The protein resides in the cytoplasm. Functionally, peptide chain release factor 1 directs the termination of translation in response to the peptide chain termination codons UAG and UAA. This chain is Peptide chain release factor 1, found in Bifidobacterium longum (strain DJO10A).